We begin with the raw amino-acid sequence, 427 residues long: Glutamate-1-semialdehyde 2,1-aminomutase (427 aa).

Lys-265 carries the post-translational modification N6-(pyridoxal phosphate)lysine.

It belongs to the class-III pyridoxal-phosphate-dependent aminotransferase family. HemL subfamily. In terms of assembly, homodimer. Pyridoxal 5'-phosphate is required as a cofactor.

Its subcellular location is the cytoplasm. The catalysed reaction is (S)-4-amino-5-oxopentanoate = 5-aminolevulinate. It participates in porphyrin-containing compound metabolism; protoporphyrin-IX biosynthesis; 5-aminolevulinate from L-glutamyl-tRNA(Glu): step 2/2. This Pseudomonas fluorescens (strain Pf0-1) protein is Glutamate-1-semialdehyde 2,1-aminomutase.